A 115-amino-acid polypeptide reads, in one-letter code: NADH-ubiquinone oxidoreductase chain 3 (115 aa).

3 helical membrane passes run 4–24 (MLAMLINITLSLCLISLAFWL), 55–75 (FFLVGITFLLLDLEIALLLPL), and 84–104 (MITTTIVSLSLVSILALGLSY).

It belongs to the complex I subunit 3 family. Core subunit of respiratory chain NADH dehydrogenase (Complex I) which is composed of 45 different subunits. Interacts with TMEM186. Interacts with TMEM242.

The protein resides in the mitochondrion inner membrane. The catalysed reaction is a ubiquinone + NADH + 5 H(+)(in) = a ubiquinol + NAD(+) + 4 H(+)(out). Its function is as follows. Core subunit of the mitochondrial membrane respiratory chain NADH dehydrogenase (Complex I) which catalyzes electron transfer from NADH through the respiratory chain, using ubiquinone as an electron acceptor. Essential for the catalytic activity of complex I. This is NADH-ubiquinone oxidoreductase chain 3 from Reithrodon auritus (Bunny rat).